We begin with the raw amino-acid sequence, 314 residues long: 4-hydroxy-3-methylbut-2-enyl diphosphate reductase (314 aa).

A [4Fe-4S] cluster-binding site is contributed by C12. Positions 43 and 81 each coordinate (2E)-4-hydroxy-3-methylbut-2-enyl diphosphate. Residues H43 and H81 each coordinate dimethylallyl diphosphate. The isopentenyl diphosphate site is built by H43 and H81. C103 serves as a coordination point for [4Fe-4S] cluster. (2E)-4-hydroxy-3-methylbut-2-enyl diphosphate is bound at residue H131. H131 contacts dimethylallyl diphosphate. H131 serves as a coordination point for isopentenyl diphosphate. E133 acts as the Proton donor in catalysis. Residue T170 coordinates (2E)-4-hydroxy-3-methylbut-2-enyl diphosphate. C198 is a binding site for [4Fe-4S] cluster. Positions 226, 228, and 271 each coordinate (2E)-4-hydroxy-3-methylbut-2-enyl diphosphate. Dimethylallyl diphosphate-binding residues include S226, N228, and S271. Isopentenyl diphosphate-binding residues include S226, N228, and S271.

It belongs to the IspH family. Requires [4Fe-4S] cluster as cofactor.

The enzyme catalyses isopentenyl diphosphate + 2 oxidized [2Fe-2S]-[ferredoxin] + H2O = (2E)-4-hydroxy-3-methylbut-2-enyl diphosphate + 2 reduced [2Fe-2S]-[ferredoxin] + 2 H(+). It catalyses the reaction dimethylallyl diphosphate + 2 oxidized [2Fe-2S]-[ferredoxin] + H2O = (2E)-4-hydroxy-3-methylbut-2-enyl diphosphate + 2 reduced [2Fe-2S]-[ferredoxin] + 2 H(+). It functions in the pathway isoprenoid biosynthesis; dimethylallyl diphosphate biosynthesis; dimethylallyl diphosphate from (2E)-4-hydroxy-3-methylbutenyl diphosphate: step 1/1. Its pathway is isoprenoid biosynthesis; isopentenyl diphosphate biosynthesis via DXP pathway; isopentenyl diphosphate from 1-deoxy-D-xylulose 5-phosphate: step 6/6. Its function is as follows. Catalyzes the conversion of 1-hydroxy-2-methyl-2-(E)-butenyl 4-diphosphate (HMBPP) into a mixture of isopentenyl diphosphate (IPP) and dimethylallyl diphosphate (DMAPP). Acts in the terminal step of the DOXP/MEP pathway for isoprenoid precursor biosynthesis. The chain is 4-hydroxy-3-methylbut-2-enyl diphosphate reductase from Bacillus pumilus (strain SAFR-032).